The following is a 464-amino-acid chain: Na(+)/H(+) antiporter NhaA 1 (464 aa).

The next 11 helical transmembrane spans lie at 41–61 (GGLI…SPLA), 85–105 (LHHW…GLEL), 121–141 (VLPI…YMSL), 150–170 (GWGI…ALLA), 180–200 (FLVA…AVFY), 207–227 (SFLI…MIGI), 234–254 (FFVG…ATLA), 329–349 (VAFF…IDFG), 363–383 (VVFG…WLAI), 399–419 (IIGA…IAEL), and 428–448 (IIQA…AGYL).

It belongs to the NhaA Na(+)/H(+) (TC 2.A.33) antiporter family.

The protein localises to the cell inner membrane. The catalysed reaction is Na(+)(in) + 2 H(+)(out) = Na(+)(out) + 2 H(+)(in). Functionally, na(+)/H(+) antiporter that extrudes sodium in exchange for external protons. In Saccharophagus degradans (strain 2-40 / ATCC 43961 / DSM 17024), this protein is Na(+)/H(+) antiporter NhaA 1.